The primary structure comprises 515 residues: GMP synthase [glutamine-hydrolyzing] (515 aa).

The 193-residue stretch at 6–198 (KVIILDFGSQ…VFKVAGLKAD (193 aa)) folds into the Glutamine amidotransferase type-1 domain. The Nucleophile role is filled by Cys-83. Residues His-172 and Glu-174 contribute to the active site. In terms of domain architecture, GMPS ATP-PPase spans 199 to 390 (WTMSSFVENC…LGLPEFIIWR (192 aa)). 226 to 232 (SGGIDST) contacts ATP.

Homodimer.

It carries out the reaction XMP + L-glutamine + ATP + H2O = GMP + L-glutamate + AMP + diphosphate + 2 H(+). It participates in purine metabolism; GMP biosynthesis; GMP from XMP (L-Gln route): step 1/1. Catalyzes the synthesis of GMP from XMP. This Maridesulfovibrio salexigens (strain ATCC 14822 / DSM 2638 / NCIMB 8403 / VKM B-1763) (Desulfovibrio salexigens) protein is GMP synthase [glutamine-hydrolyzing].